A 410-amino-acid polypeptide reads, in one-letter code: Peptidase T (410 aa).

Position 79 (H79) interacts with Zn(2+). Residue D81 is part of the active site. Residue D142 participates in Zn(2+) binding. E176 serves as the catalytic Proton acceptor. Zn(2+) is bound by residues E177, D199, and H381.

Belongs to the peptidase M20B family. Zn(2+) is required as a cofactor.

The protein localises to the cytoplasm. The enzyme catalyses Release of the N-terminal residue from a tripeptide.. In terms of biological role, cleaves the N-terminal amino acid of tripeptides. This Listeria innocua serovar 6a (strain ATCC BAA-680 / CLIP 11262) protein is Peptidase T.